A 439-amino-acid polypeptide reads, in one-letter code: Sequestosome-1 (439 aa).

The residue at position 2 (Ala2) is an N-acetylalanine. The tract at residues 2–48 is interaction with LCK; it reads ASLTVKAYLLGKEEAAREIRRFSFCFSPEPEAEAAAGPGPCERLLSR. The region spanning 3 to 100 is the PB1 domain; that stretch reads SLTVKAYLLG…DIFRIYIKEK (98 aa). Phosphoserine is present on Ser24. Residues 41–105 form an interaction with PRKCZ and dimerization region; that stretch reads PCERLLSRVA…YIKEKKECRR (65 aa). The segment at 48 to 78 is interaction with PAWR; that stretch reads RVAVLFPALRPGGFQAHYRDEDGDLVAFSSD. The tract at residues 119–221 is interaction with GABRR3; sequence VHPNVICDGC…DGRPCPTAES (103 aa). Residues 120-170 form a ZZ-type zinc finger; that stretch reads HPNVICDGCNGPVVGTRYKCSVCPDYDLCSVCEGKGLHREHSKLIFPNPFG. Zn(2+)-binding residues include Cys125, Cys128, Cys139, and Cys142. A Phosphotyrosine modification is found at Tyr145. The Zn(2+) site is built by Cys148, Cys151, His157, and His160. Residues 167–217 are LIM protein-binding; the sequence is NPFGHLSDSFSHSRWLRKLKHGHFGWPGWEMGPPGNWSPRPPRAGDGRPCP. Ser173, Ser175, and Ser204 each carry phosphoserine. The disordered stretch occupies residues 201 to 231; sequence GNWSPRPPRAGDGRPCPTAESASAPSEDPNV. A TRAF6-binding motif is present at residues 225–230; the sequence is PSEDPN. Ser246 and Ser263 each carry phosphoserine. The segment at 259 to 389 is disordered; that stretch reads GGKRSRLTPT…ALYPHLPPEA (131 aa). Polar residues predominate over residues 265-292; it reads LTPTSAESSSTGTEDKSGTQPSSCSSEV. Phosphothreonine is present on Thr266. The interaction with NTRK1 stretch occupies residues 266–439; it reads TPTSAESSST…IQYSKHPPPL (174 aa). Phosphoserine is present on residues Ser269 and Ser281. A lipid anchor (S-palmitoyl cysteine) is attached at Cys288. Phosphoserine is present on residues Ser305, Ser327, and Ser331. An MAP1LC3B-binding region spans residues 320-341; that stretch reads QPEELMESDNCSGGDDDWTHLS. The LIR motif lies at 335–340; sequence DDWTHL. Over residues 336 to 346 the composition is skewed to basic and acidic residues; the sequence is DWTHLSSKEVD. An interaction with KEAP1 region spans residues 346 to 351; it reads DPSTGE. A phosphoserine mark is found at Ser348, Ser354, Ser360, Ser364, and Ser365. The span at 350–372 shows a compositional bias: polar residues; the sequence is GELQSLQMPESEGPSSLDPSQEG. In terms of domain architecture, UBA spans 388-433; the sequence is EADPRLIESLSQMLSMGFSDEGGWLTRLLQTKNYDIGAALDTIQYS. Position 402 is a phosphoserine; by ULK1 and TBK1 (Ser402). The residue at position 406 (Ser406) is a Phosphoserine. 2 positions are modified to N6-acetyllysine; alternate: Lys419 and Lys434. A Glycyl lysine isopeptide (Lys-Gly) (interchain with G-Cter in ubiquitin); alternate cross-link involves residue Lys419. Residue Lys434 forms a Glycyl lysine isopeptide (Lys-Gly) (interchain with G-Cter in SUMO2); alternate linkage.

Homooligomer or heterooligomer; may form homotypic arrays. Dimerization interferes with ubiquitin binding. Component of a ternary complex with PAWR and PRKCZ. Forms a complex with JUB/Ajuba, PRKCZ and TRAF6. Identified in a complex with TRAF6 and CYLD. Identified in a heterotrimeric complex with ubiquitin and ZFAND5, where ZFAND5 and SQSTM1 both interact with the same ubiquitin molecule. Interacts (via LIR motif) with MAP1LC3A and MAP1LC3B, as well as with other ATG8 family members, including GABARAP, GABARAPL1 and GABARAPL2; these interactions are necessary for the recruitment MAP1 LC3 family members to inclusion bodies containing polyubiquitinated protein aggregates and for their degradation by autophagy. Interacts directly with PRKCI and PRKCZ. Interacts with EBI3, LCK, RASA1, NR2F2, NTRK1, NTRK2, NTRK3, NBR1, MAP2K5 and MAPKAPK5. Upon TNF-alpha stimulation, interacts with RIPK1 probably bridging IKBKB to the TNF-R1 complex composed of TNF-R1/TNFRSF1A, TRADD and RIPK1. Interacts with the proteasome subunits PSMD4 and PSMC2. Interacts with TRAF6. Interacts with 'Lys-63'-linked polyubiquitinated MAPT/TAU. Interacts with FHOD3. Interacts with CYLD. Interacts with SESN1. Interacts with SESN2. Interacts with ULK1. Interacts with UBD. Interacts with WDR81; the interaction is direct and regulates the interaction of SQSTM1 with ubiquitinated proteins. Interacts with WDFY3; this interaction is required to recruit WDFY3 to cytoplasmic bodies and to PML bodies. Interacts with LRRC25. Interacts with STING1; leading to relocalization of STING1 to autophagosomes. Interacts (when phosphorylated at Ser-348) with KEAP1; the interaction is direct and inactivates the BCR(KEAP1) complex by sequestering KEAP1 in inclusion bodies, promoting its degradation. Interacts with MOAP1; promoting dissociation of SQSTM1 inclusion bodies that sequester KEAP1. Interacts with GBP1. Interacts with TAX1BP1. Interacts with (ubiquitinated) PEX5; specifically binds PEX5 ubiquitinated at 'Lys-209' in response to reactive oxygen species (ROS). Interacts (via PB1 domain) with TNS2; the interaction leads to sequestration of TNS2 in cytoplasmic aggregates with SQSTM1 and promotes TNS2 ubiquitination and proteasomal degradation. Interacts with IRS1; the interaction is disrupted by the presence of tensin TNS2. Interacts with TRIM5. Interacts with TRIM11 (when ubiquitinated); promoting AIM2 recruitment to autophagosomes and autophagy-dependent degradation of AIM2. Interacts with TRIM13. Interacts with TRIM16. Interacts with TRIM23. Interacts with TRIM50. Interacts with TRIM55. Interacts with ECSIT; this interaction inhibits TLR4 signaling via functional regulation of the TRAF6-ECSIT complex. Interacts with GABRR1, GABRR2 and GABRR3. Interacts with WDR83. Interacts with GRB2. Interacts with USP12; the interaction is independent of USP12 deubiquitinase activity and may be involved in regulation of autophagic flux. Interacts with ASB6. Post-translationally, phosphorylated. Phosphorylation at Ser-406 by ULK1 destabilizes the UBA dimer interface and increases binding affinity to ubiquitinated proteins. Phosphorylation at Ser-406 also primes for subsequent phosphorylation at Ser-402. Phosphorylation at Ser-402 by CK2 or ULK1 promotes binding to ubiquitinated proteins by increasing the affinity between the UBA domain and polyubiquitin chains. Phosphorylation at Ser-402 by ULK1 is stimulated by SESN2. Phosphorylated at Ser-402 by TBK1, leading to promote relocalization of 'Lys-63'-linked ubiquitinated STING1 to autophagosomes. Phosphorylation at Ser-348 by ULK1 promotes interaction with KEAP1 and inactivation of the BCR(KEAP1) complex, promoting NFE2L2/NRF2 nuclear accumulation and expression of phase II detoxifying enzymes. Phosphorylated in vitro by TTN. In terms of processing, ubiquitinated by UBE2J1 and RNF26 at Lys-434: ubiquitinated SQSTM1 attracts specific vesicle-associated adapters, forming a molecular bridge that restrains cognate vesicles in the perinuclear region and organizes the endosomal pathway for efficient cargo transport. Ubiquitination by UBE2D2 and UBE2D3 increases its ability to bind polyubiquitin chains by destabilizing the UBA dimer interface. Deubiquitination by USP15 releases target vesicles for fast transport into the cell periphery. Ubiquitinated by the BCR(KEAP1) complex at Lys-419, increasing SQSTM1 sequestering activity and promoting its degradation. Ubiquitinated via 'Lys-29' and 'Lys-33'-linked polyubiquitination leading to xenophagic targeting of bacteria and inhibition of their replication. Acetylated at Lys-419 and Lys-434 by KAT5/TIP60, promotes activity by destabilizing the UBA dimer interface and increases binding affinity to ubiquitinated proteins. Deacetylated by HDAC6. Post-translationally, palmitoylation at Cys-288 by ZDHHC19 is required for efficient autophagic degradation of SQSTM1-cargo complexes by promoting affinity for ATG8 proteins and recruitment of p62 bodies to autophagosomes. Dealmitoylated at Cys-288 by LYPLA1. As to expression, ubiquitously expressed. In brain, mainly expressed by neurons, especially pyramidal neurons in the cerebral cortex and hippocampus. Also expressed by Purkinje cells and neurons in the dentate nucleus of the cerebellum and neurons of the basal ganglia (at protein level).

It is found in the cytoplasmic vesicle. The protein localises to the autophagosome. It localises to the preautophagosomal structure. Its subcellular location is the cytoplasm. The protein resides in the cytosol. It is found in the nucleus. The protein localises to the PML body. It localises to the late endosome. Its subcellular location is the lysosome. The protein resides in the endoplasmic reticulum. It is found in the myofibril. The protein localises to the sarcomere. Its function is as follows. Molecular adapter required for selective macroautophagy (aggrephagy) by acting as a bridge between polyubiquitinated proteins and autophagosomes. Promotes the recruitment of ubiquitinated cargo proteins to autophagosomes via multiple domains that bridge proteins and organelles in different steps. SQSTM1 first mediates the assembly and removal of ubiquitinated proteins by undergoing liquid-liquid phase separation upon binding to ubiquitinated proteins via its UBA domain, leading to the formation of insoluble cytoplasmic inclusions, known as p62 bodies. SQSTM1 then interacts with ATG8 family proteins on autophagosomes via its LIR motif, leading to p62 body recruitment to autophagosomes, followed by autophagic clearance of ubiquitinated proteins. SQSTM1 is itself degraded along with its ubiquitinated cargos. Also required to recruit ubiquitinated proteins to PML bodies in the nucleus. Also involved in autophagy of peroxisomes (pexophagy) in response to reactive oxygen species (ROS) by acting as a bridge between ubiquitinated PEX5 receptor and autophagosomes. Acts as an activator of the NFE2L2/NRF2 pathway via interaction with KEAP1: interaction inactivates the BCR(KEAP1) complex by sequestering the complex in inclusion bodies, promoting nuclear accumulation of NFE2L2/NRF2 and subsequent expression of cytoprotective genes. Promotes relocalization of 'Lys-63'-linked ubiquitinated STING1 to autophagosomes. Involved in endosome organization by retaining vesicles in the perinuclear cloud: following ubiquitination by RNF26, attracts specific vesicle-associated adapters, forming a molecular bridge that restrains cognate vesicles in the perinuclear region and organizes the endosomal pathway for efficient cargo transport. Sequesters tensin TNS2 into cytoplasmic puncta, promoting TNS2 ubiquitination and proteasomal degradation. May regulate the activation of NFKB1 by TNF-alpha, nerve growth factor (NGF) and interleukin-1. May play a role in titin/TTN downstream signaling in muscle cells. Adapter that mediates the interaction between TRAF6 and CYLD. In terms of biological role, more potent than isoform 2 to stimulate PRKCZ-dependent phosphorylation of KCNAB2. The sequence is that of Sequestosome-1 (Sqstm1) from Rattus norvegicus (Rat).